The sequence spans 656 residues: Probable Xaa-Pro aminopeptidase P (656 aa).

The Mn(2+) site is built by D453, D464, E562, and E576.

It belongs to the peptidase M24B family. It depends on Mn(2+) as a cofactor.

The enzyme catalyses Release of any N-terminal amino acid, including proline, that is linked to proline, even from a dipeptide or tripeptide.. Functionally, catalyzes the removal of a penultimate prolyl residue from the N-termini of peptides. The polypeptide is Probable Xaa-Pro aminopeptidase P (ampp) (Pyrenophora teres f. teres (strain 0-1) (Barley net blotch fungus)).